A 221-amino-acid polypeptide reads, in one-letter code: Immediate early response gene 2 protein (221 aa).

The residue at position 1 (methionine 1) is an N-acetylmethionine. Residues 105-155 form a disordered region; that stretch reads ETPALCDPPPARVSRKRRSSSDLSDGSDAGLVPSKKARLEEVEGEATSEVP. Residues 125 to 136 are compositionally biased toward low complexity; sequence SDLSDGSDAGLV.

This sequence belongs to the IER family.

The protein localises to the cytoplasm. It is found in the nucleus. In terms of biological role, DNA-binding protein that seems to act as a transcription factor. Involved in the regulation of neuronal differentiation, acts upon JNK-signaling pathway activation and plays a role in neurite outgrowth in hippocampal cells. May mediate with FIBP FGF-signaling in the establishment of laterality in the embryo. Promotes cell motility, seems to stimulate tumor metastasis. This chain is Immediate early response gene 2 protein (Ier2), found in Mus musculus (Mouse).